Here is a 376-residue protein sequence, read N- to C-terminus: Formate dehydrogenase 1 (376 aa).

Substrate is bound by residues V97 and N121. NAD(+) is bound by residues 176–177 (RI), D197, 244–248 (PLHKD), T270, D296, and 325–328 (HISG).

This sequence belongs to the D-isomer specific 2-hydroxyacid dehydrogenase family. FDH subfamily. Homodimer.

It localises to the cytoplasm. The enzyme catalyses formate + NAD(+) = CO2 + NADH. Its function is as follows. Catalyzes the NAD(+)-dependent oxidation of formate to carbon dioxide. Formate oxidation is the final step in the methanol oxidation pathway in methylotrophic microorganisms. Has a role in the detoxification of exogenous formate in non-methylotrophic organisms. This Saccharomyces cerevisiae (strain YJM789) (Baker's yeast) protein is Formate dehydrogenase 1 (FDH1).